Here is a 227-residue protein sequence, read N- to C-terminus: Uracil-DNA glycosylase (227 aa).

The Proton acceptor role is filled by D68.

This sequence belongs to the uracil-DNA glycosylase (UDG) superfamily. UNG family.

It is found in the cytoplasm. It carries out the reaction Hydrolyzes single-stranded DNA or mismatched double-stranded DNA and polynucleotides, releasing free uracil.. In terms of biological role, excises uracil residues from the DNA which can arise as a result of misincorporation of dUMP residues by DNA polymerase or due to deamination of cytosine. This chain is Uracil-DNA glycosylase, found in Mycobacterium sp. (strain JLS).